We begin with the raw amino-acid sequence, 377 residues long: Chaperone protein DnaJ (377 aa).

The 66-residue stretch at 5–70 (DYYEVLGVGR…NKKAAYDQFG (66 aa)) folds into the J domain. Residues 133 to 211 (GLTKELRIPT…CHGDGRVEKT (79 aa)) form a CR-type zinc finger. The Zn(2+) site is built by Cys-146, Cys-149, Cys-163, Cys-166, Cys-185, Cys-188, Cys-199, and Cys-202. 4 CXXCXGXG motif repeats span residues 146–153 (CDVCDGSG), 163–170 (CGTCHGQG), 185–192 (CPTCHGRG), and 199–206 (CTKCHGDG).

Belongs to the DnaJ family. In terms of assembly, homodimer. The cofactor is Zn(2+).

It is found in the cytoplasm. Functionally, participates actively in the response to hyperosmotic and heat shock by preventing the aggregation of stress-denatured proteins and by disaggregating proteins, also in an autonomous, DnaK-independent fashion. Unfolded proteins bind initially to DnaJ; upon interaction with the DnaJ-bound protein, DnaK hydrolyzes its bound ATP, resulting in the formation of a stable complex. GrpE releases ADP from DnaK; ATP binding to DnaK triggers the release of the substrate protein, thus completing the reaction cycle. Several rounds of ATP-dependent interactions between DnaJ, DnaK and GrpE are required for fully efficient folding. Also involved, together with DnaK and GrpE, in the DNA replication of plasmids through activation of initiation proteins. The polypeptide is Chaperone protein DnaJ (Shewanella sp. (strain MR-4)).